A 256-amino-acid chain; its full sequence is Distal membrane-arm assembly complex protein 2 (256 aa).

At Ser252 the chain carries Phosphoserine.

This sequence belongs to the ATP synthase subunit s family. Interacts with incompletely assembled mitochondrial NADH:ubiquinone oxidoreductase complex (complex I).

The protein localises to the mitochondrion. Functionally, required for the assembly of the mitochondrial NADH:ubiquinone oxidoreductase complex (complex I). Involved in the assembly of the distal region of complex I. This Macaca fascicularis (Crab-eating macaque) protein is Distal membrane-arm assembly complex protein 2.